Here is a 102-residue protein sequence, read N- to C-terminus: Signal recognition particle 19 kDa protein (102 aa).

This sequence belongs to the SRP19 family. Part of the signal recognition particle protein translocation system, which is composed of SRP and FtsY. Archaeal SRP consists of a 7S RNA molecule of 300 nucleotides and two protein subunits: SRP54 and SRP19.

Its subcellular location is the cytoplasm. Functionally, involved in targeting and insertion of nascent membrane proteins into the cytoplasmic membrane. Binds directly to 7S RNA and mediates binding of the 54 kDa subunit of the SRP. The protein is Signal recognition particle 19 kDa protein of Saccharolobus solfataricus (strain ATCC 35092 / DSM 1617 / JCM 11322 / P2) (Sulfolobus solfataricus).